The chain runs to 487 residues: Chromosomal replication initiator protein DnaA (487 aa).

The tract at residues 1 to 79 (MPNSMWHQCL…QAPRVMMKVG (79 aa)) is domain I, interacts with DnaA modulators. The disordered stretch occupies residues 78-138 (VGSAPKPTDP…PAPKAQAERR (61 aa)). The domain II stretch occupies residues 79 to 150 (GSAPKPTDPV…QVEGDIKHQS (72 aa)). A domain III, AAA+ region region spans residues 151–367 (FLNETFTFDT…GALRLVIANA (217 aa)). Residues glycine 195, glycine 197, lysine 198, and threonine 199 each contribute to the ATP site. The segment at 368–487 (HFTGSEITPP…YQNFMRLLTT (120 aa)) is domain IV, binds dsDNA.

Belongs to the DnaA family. As to quaternary structure, oligomerizes as a right-handed, spiral filament on DNA at oriC.

It is found in the cytoplasm. Its function is as follows. Plays an essential role in the initiation and regulation of chromosomal replication. ATP-DnaA binds to the origin of replication (oriC) to initiate formation of the DNA replication initiation complex once per cell cycle. Binds the DnaA box (a 9 base pair repeat at the origin) and separates the double-stranded (ds)DNA. Forms a right-handed helical filament on oriC DNA; dsDNA binds to the exterior of the filament while single-stranded (ss)DNA is stabiized in the filament's interior. The ATP-DnaA-oriC complex binds and stabilizes one strand of the AT-rich DNA unwinding element (DUE), permitting loading of DNA polymerase. After initiation quickly degrades to an ADP-DnaA complex that is not apt for DNA replication. Binds acidic phospholipids. This Marinobacter nauticus (strain ATCC 700491 / DSM 11845 / VT8) (Marinobacter aquaeolei) protein is Chromosomal replication initiator protein DnaA.